The following is a 558-amino-acid chain: MAELTISADDIQNAIEEYVSSFTADTFREEVGTVVDVGDSIAHVEGLPSVMTQELLEFPGGILGVALNLDEHNVGAVILGDFENIKEGQKVKRTGDVLSVPVGEAFMGRVVNPLGQPIDGRGDIEAEARRALELQAPSVVQRQSVKEPLQTGIKAIDAMTPIGRGQRQLVIGDRKTGKTAVCVDTILNQRQNWESGDPKRQVRCVYVAIGQKGTTIASVRRALEEGGAMDYTTIVAALASDSAGFKWLAPYTGSAIAQHWMYDGKHVLIVFDDLTKQAEAYRAISLLLRRPPGREAYPGDVFYLHSRLLERCAKLADHLGGGSLTGLPIIETKANDISAYIPTNVISITDGQCFLETDLFNQGVRPAINVGVSVSRVGGAAQIKAMKEVAGSLRLDLSQYRELEAFAAFASDLDATSKAQLERGARLVELLKQPQYQPMPVEEQVISLFLGTGGHLDSVPVGDVRRFETELLDHIRVAQEEILTEIRESQKLTDEAADSLTEVIKSFKKGFAATGGASVVPNEHVAALDEEKLDKESVKVHQAIPAKTSEKSKNSTPR.

An ATP-binding site is contributed by 172–179 (GDRKTGKT). The segment at 536–558 (ESVKVHQAIPAKTSEKSKNSTPR) is disordered. Over residues 548–558 (TSEKSKNSTPR) the composition is skewed to basic and acidic residues.

This sequence belongs to the ATPase alpha/beta chains family. F-type ATPases have 2 components, CF(1) - the catalytic core - and CF(0) - the membrane proton channel. CF(1) has five subunits: alpha(3), beta(3), gamma(1), delta(1), epsilon(1). CF(0) has three main subunits: a(1), b(2) and c(9-12). The alpha and beta chains form an alternating ring which encloses part of the gamma chain. CF(1) is attached to CF(0) by a central stalk formed by the gamma and epsilon chains, while a peripheral stalk is formed by the delta and b chains.

The protein localises to the cell membrane. The catalysed reaction is ATP + H2O + 4 H(+)(in) = ADP + phosphate + 5 H(+)(out). In terms of biological role, produces ATP from ADP in the presence of a proton gradient across the membrane. The alpha chain is a regulatory subunit. This Mycobacterium leprae (strain Br4923) protein is ATP synthase subunit alpha.